A 167-amino-acid chain; its full sequence is NAD(P)H-quinone oxidoreductase subunit I, chloroplastic (167 aa).

4Fe-4S ferredoxin-type domains lie at 55–84 (GRIHFEFDKCIACEVCVRVCPINLPVVDWI) and 95–124 (KNYSIDFGVCIFCGNCVEYCPTNCLSMTEE). Positions 64, 67, 70, 74, 104, 107, 110, and 114 each coordinate [4Fe-4S] cluster.

The protein belongs to the complex I 23 kDa subunit family. In terms of assembly, NDH is composed of at least 16 different subunits, 5 of which are encoded in the nucleus. [4Fe-4S] cluster serves as cofactor.

Its subcellular location is the plastid. It is found in the chloroplast thylakoid membrane. The enzyme catalyses a plastoquinone + NADH + (n+1) H(+)(in) = a plastoquinol + NAD(+) + n H(+)(out). The catalysed reaction is a plastoquinone + NADPH + (n+1) H(+)(in) = a plastoquinol + NADP(+) + n H(+)(out). Its function is as follows. NDH shuttles electrons from NAD(P)H:plastoquinone, via FMN and iron-sulfur (Fe-S) centers, to quinones in the photosynthetic chain and possibly in a chloroplast respiratory chain. The immediate electron acceptor for the enzyme in this species is believed to be plastoquinone. Couples the redox reaction to proton translocation, and thus conserves the redox energy in a proton gradient. In Adiantum capillus-veneris (Maidenhair fern), this protein is NAD(P)H-quinone oxidoreductase subunit I, chloroplastic.